A 273-amino-acid polypeptide reads, in one-letter code: Zinc finger protein 80 (273 aa).

7 consecutive C2H2-type zinc fingers follow at residues tyrosine 49 to histidine 71, tyrosine 77 to histidine 99, lysine 103 to histidine 127, tyrosine 133 to histidine 155, phenylalanine 161 to histidine 183, tyrosine 189 to histidine 211, and tyrosine 217 to histidine 239.

Belongs to the krueppel C2H2-type zinc-finger protein family.

The protein localises to the nucleus. May be involved in transcriptional regulation. This is Zinc finger protein 80 (ZNF80) from Pongo pygmaeus (Bornean orangutan).